A 354-amino-acid polypeptide reads, in one-letter code: MTELKNDRYLRALLRQPVDVTPVWMMRQAGRYLPEYKATRAQAGDFMSLCKNAELACEVTLQPLRRYPLDAAILFSDILTVPDAMGLGLYFEAGEGPRFTSPVTCKADVDKLPIPDPEDELGYVMNAVRTIRRELKGEVPLIGFSGSPWTLATYMVEGGSSKAFTVIKKMMYADPQALHALLDKLAKSVTLYLNAQIKAGAQAVMIFDTWGGVLTGRDYQQFSLYYMHKIVDGLLRENDGRRVPVTLFTKGGGQWLEAMAETGCDALGLDWTTDIADARRRVGNKVALQGNMDPSMLYAPPARIEEEVATILAGFGHGEGHVFNLGHGIHQDVPPEHAGVFVEAVHRLSEQYHR.

Residues 27-31 (RQAGR), Asp-77, Tyr-154, Thr-209, and His-327 each bind substrate.

The protein belongs to the uroporphyrinogen decarboxylase family. Homodimer.

It localises to the cytoplasm. It carries out the reaction uroporphyrinogen III + 4 H(+) = coproporphyrinogen III + 4 CO2. The protein operates within porphyrin-containing compound metabolism; protoporphyrin-IX biosynthesis; coproporphyrinogen-III from 5-aminolevulinate: step 4/4. Its function is as follows. Catalyzes the decarboxylation of four acetate groups of uroporphyrinogen-III to yield coproporphyrinogen-III. This Escherichia coli O17:K52:H18 (strain UMN026 / ExPEC) protein is Uroporphyrinogen decarboxylase.